Consider the following 268-residue polypeptide: Indole-3-glycerol phosphate synthase (268 aa).

The protein belongs to the TrpC family.

The catalysed reaction is 1-(2-carboxyphenylamino)-1-deoxy-D-ribulose 5-phosphate + H(+) = (1S,2R)-1-C-(indol-3-yl)glycerol 3-phosphate + CO2 + H2O. The protein operates within amino-acid biosynthesis; L-tryptophan biosynthesis; L-tryptophan from chorismate: step 4/5. This chain is Indole-3-glycerol phosphate synthase, found in Acinetobacter baumannii (strain ACICU).